We begin with the raw amino-acid sequence, 494 residues long: Aspartyl/glutamyl-tRNA(Asn/Gln) amidotransferase subunit B (494 aa).

It belongs to the GatB/GatE family. GatB subfamily. Heterotrimer of A, B and C subunits.

It catalyses the reaction L-glutamyl-tRNA(Gln) + L-glutamine + ATP + H2O = L-glutaminyl-tRNA(Gln) + L-glutamate + ADP + phosphate + H(+). It carries out the reaction L-aspartyl-tRNA(Asn) + L-glutamine + ATP + H2O = L-asparaginyl-tRNA(Asn) + L-glutamate + ADP + phosphate + 2 H(+). Functionally, allows the formation of correctly charged Asn-tRNA(Asn) or Gln-tRNA(Gln) through the transamidation of misacylated Asp-tRNA(Asn) or Glu-tRNA(Gln) in organisms which lack either or both of asparaginyl-tRNA or glutaminyl-tRNA synthetases. The reaction takes place in the presence of glutamine and ATP through an activated phospho-Asp-tRNA(Asn) or phospho-Glu-tRNA(Gln). This Rhodopseudomonas palustris (strain BisB18) protein is Aspartyl/glutamyl-tRNA(Asn/Gln) amidotransferase subunit B.